A 737-amino-acid chain; its full sequence is Delta and Notch-like epidermal growth factor-related receptor (737 aa).

The N-terminal stretch at 1 to 34 is a signal peptide; the sequence is MQPRRAQAPGAQLLPALALLLLLLGAGPRGSSLA. Topologically, residues 35–640 are extracellular; that stretch reads NPVPAAPLSA…LTNMPRHSLY (606 aa). EGF-like domains follow at residues 44–92 and 94–133; these read APGP…ANCQ and VADP…PNCE. Residues 44-133 form an interaction with NOTCH1 region; the sequence is APGPCAAQPC…NEGYEGPNCE (90 aa). 6 cysteine pairs are disulfide-bonded: Cys-48-Cys-59, Cys-53-Cys-80, Cys-82-Cys-91, Cys-98-Cys-108, Cys-103-Cys-121, and Cys-123-Cys-132. Asn-223 carries an N-linked (GlcNAc...) asparagine glycan. EGF-like domains follow at residues 309-348, 349-390, 392-428, 430-466, and 468-503; these read PGES…TFCE, EYDA…ELCQ, KIDY…SACE, KVDP…PTCA, and LIDF…LYCE. Disulfide bonds link Cys-319–Cys-336, Cys-338–Cys-347, Cys-353–Cys-364, Cys-358–Cys-378, Cys-380–Cys-389, Cys-396–Cys-407, Cys-401–Cys-416, Cys-418–Cys-427, Cys-434–Cys-445, Cys-439–Cys-454, Cys-456–Cys-465, Cys-472–Cys-482, Cys-477–Cys-491, Cys-493–Cys-502, Cys-509–Cys-520, Cys-514–Cys-529, Cys-531–Cys-540, Cys-547–Cys-558, Cys-552–Cys-567, Cys-569–Cys-578, Cys-585–Cys-596, Cys-590–Cys-605, and Cys-607–Cys-616. The 37-residue stretch at 505–541 folds into the EGF-like 8; calcium-binding domain; that stretch reads EYNECLSAPCLNAATCRDLVNGYECVCLAEYKGTHCE. An EGF-like 9 domain is found at 543–579; the sequence is YKDPCANVSCLNGATCDSDGLNGTCICAPGFTGEECD. The Follistatin-like domain maps to 546-568; sequence PCANVSCLNGATCDSDGLNGTCI. Residue Asn-564 is glycosylated (N-linked (GlcNAc...) asparagine). The region spanning 581–617 is the EGF-like 10; calcium-binding domain; that stretch reads DINECDSNPCHHGGSCLDQPNGYNCHCPHGWVGANCE. Residues 641–661 traverse the membrane as a helical segment; it reads IIIGALCVAFILMLIILIVGI. Residues 662–737 lie on the Cytoplasmic side of the membrane; it reads CRISRIEYQG…LVTLIKTKDL (76 aa). Residues 677–680 are interaction with AP1G1 and somatodendritic targeting; sequence YEEF. Position 685 is a phosphoserine (Ser-685). Tyr-711 and Tyr-721 each carry phosphotyrosine. A Phosphoserine modification is found at Ser-722.

In terms of assembly, interacts with AP1G1. Interacts with NOTCH1. In terms of tissue distribution, expressed in brain, spinal cord and adrenal gland.

Its subcellular location is the cell membrane. Activator of the NOTCH1 pathway. May mediate neuron-glia interaction during astrocytogenesis. The protein is Delta and Notch-like epidermal growth factor-related receptor (DNER) of Homo sapiens (Human).